The primary structure comprises 422 residues: Phytoene synthase, chloroplastic (422 aa).

The transit peptide at 1–83 (MSLASSLVVS…GSVIVASMVA (83 aa)) directs the protein to the chloroplast.

This sequence belongs to the phytoene/squalene synthase family. As to quaternary structure, monomer.

It localises to the plastid. The protein resides in the chloroplast. It catalyses the reaction 2 (2E,6E,10E)-geranylgeranyl diphosphate = 15-cis-phytoene + 2 diphosphate. Its pathway is carotenoid biosynthesis; phytoene biosynthesis; all-trans-phytoene from geranylgeranyl diphosphate: step 1/1. In terms of biological role, catalyzes the reaction from prephytoene diphosphate to phytoene. This is Phytoene synthase, chloroplastic (PSY) from Cucumis melo (Muskmelon).